Consider the following 121-residue polypeptide: Large ribosomal subunit protein bL21 (121 aa).

The protein belongs to the bacterial ribosomal protein bL21 family. In terms of assembly, part of the 50S ribosomal subunit. Contacts protein L20.

Its function is as follows. This protein binds to 23S rRNA in the presence of protein L20. This chain is Large ribosomal subunit protein bL21, found in Synechococcus sp. (strain CC9605).